A 125-amino-acid polypeptide reads, in one-letter code: uncharacterized protein (125 aa).

The interval Gln-50 to Ser-73 is disordered.

This is an uncharacterized protein from Microplitis demolitor (Parasitoid wasp).